The sequence spans 442 residues: Cytokine receptor-like factor 3 (442 aa).

Positions 10-46 (EVLLQEARENVEAAQSYRRELGQRLQGLREAQRQIKE) form a coiled coil. One can recognise a Fibronectin type-III domain in the interval 181–274 (PPVQIEELIE…PQTGHSTLVP (94 aa)).

This sequence belongs to the cytokine receptor-like factor 3 family.

It localises to the cytoplasm. In terms of biological role, may play a role in the negative regulation of cell cycle progression. The chain is Cytokine receptor-like factor 3 (Crlf3) from Mus musculus (Mouse).